Consider the following 43-residue polypeptide: Photosystem I reaction center subunit IX (43 aa).

The helical transmembrane segment at 7–27 threads the bilayer; the sequence is YLSVAPVLSALWFGALAGLLI.

It belongs to the PsaJ family.

The protein resides in the plastid. It is found in the chloroplast thylakoid membrane. May help in the organization of the PsaE and PsaF subunits. The chain is Photosystem I reaction center subunit IX from Oenothera argillicola (Appalachian evening primrose).